The chain runs to 136 residues: MSSGGKSGGKAGDASSKAQSRSAKAGLQFPVGRIHRLLRKGNYAQRVGAGAPVYLAAVLEYLAAEILELAGNAARDNKKSRIIPRHLQLAIRNDEELNKLLGGVTISQGGVLPFIQSELLPAKSGKPKKAGGSQDI.

Over residues 1 to 11 the composition is skewed to gly residues; that stretch reads MSSGGKSGGKA. The tract at residues 1–24 is disordered; that stretch reads MSSGGKSGGKAGDASSKAQSRSAK. N6-acetyllysine occurs at positions 6 and 10. A compositionally biased stretch (low complexity) spans 12–24; it reads GDASSKAQSRSAK. Glutamine 108 is subject to N5-methylglutamine. Serine 133 carries the phosphoserine modification. A [ST]-Q motif motif is present at residues 133-134; that stretch reads SQ.

Belongs to the histone H2A family. In terms of assembly, the nucleosome is a histone octamer containing two molecules each of H2A, H2B, H3 and H4 assembled in one H3-H4 heterotetramer and two H2A-H2B heterodimers. The octamer wraps approximately 147 bp of DNA. Post-translationally, phosphorylated to form H2AS128ph (gamma-H2A) in response to DNA double-strand breaks (DSBs) generated by exogenous genotoxic agents and by stalled replication forks. Phosphorylation is dependent on the DNA damage checkpoint kinases MEC1/ATR and TEL1/ATM, spreads on either side of a detected DSB site and may mark the surrounding chromatin for recruitment of proteins required for DNA damage signaling and repair. Gamma-H2A is removed from the DNA prior to the strand invasion-primer extension step of the repair process and subsequently dephosphorylated. Dephosphorylation is necessary for efficient recovery from the DNA damage checkpoint. Acetylated by ESA1 to form H2AK4ac and H2AK7ac.

The protein localises to the nucleus. It localises to the chromosome. Core component of nucleosome which plays a central role in DNA double strand break (DSB) repair. Nucleosomes wrap and compact DNA into chromatin, limiting DNA accessibility to the cellular machineries which require DNA as a template. Histones thereby play a central role in transcription regulation, DNA repair, DNA replication and chromosomal stability. DNA accessibility is regulated via a complex set of post-translational modifications of histones, also called histone code, and nucleosome remodeling. In Mycosarcoma maydis (Corn smut fungus), this protein is Histone H2A (HTA1).